The sequence spans 217 residues: Tegument protein BKRF4 (217 aa).

Residues 1–217 (MAMFLKSRGV…GNNNYNWPWL (217 aa)) are disordered. The span at 32 to 42 (YTLGSQASQSI) shows a compositional bias: polar residues. Residues 43-79 (QEEDVSDTDESDYSDEDEEIDLEEEYPSDEDPSEGSD) show a composition bias toward acidic residues. An interaction with host histones H3/H4 region spans residues 63 to 64 (DL). An interaction with host H2A/H2B region spans residues 81 to 84 (DPSW). Positions 89-102 (SDESDYSESDEDEA) are enriched in acidic residues. Residues 106 to 132 (SQASRSSRVSPSTQQSSGLTPTPSFSR) show a composition bias toward low complexity. The span at 136–145 (RAPPRPPAPA) shows a compositional bias: pro residues. The segment covering 208–217 (GNNNYNWPWL) has biased composition (polar residues).

Belongs to the lymphocryptovirus BKRF4 family. As to quaternary structure, forms a complex with the host H3/H4 dimer and histone chaperone ASF1. Also forms a complex with host H2A/H2B dimer. Interacts (via C-terminus) with BGLF2; this interaction is important for infectious virion production.

It is found in the virion tegument. It localises to the host nucleus. The protein resides in the host cytoplasm. The protein localises to the host perinuclear region. Its function is as follows. Histone-binding protein that binds to histones H2A/H2B, H3/H4 and cellular chromatin to overcome the host DNA damage response triggered by the viral genome ends. Interferes with histone ubiquitination and recruitment of repair proteins. The sequence is that of Tegument protein BKRF4 from Epstein-Barr virus (strain GD1) (HHV-4).